A 262-amino-acid polypeptide reads, in one-letter code: tRNA pseudouridine synthase A (262 aa).

Asp-52 (nucleophile) is an active-site residue. Substrate is bound at residue Tyr-110.

This sequence belongs to the tRNA pseudouridine synthase TruA family. Homodimer.

It catalyses the reaction uridine(38/39/40) in tRNA = pseudouridine(38/39/40) in tRNA. Its function is as follows. Formation of pseudouridine at positions 38, 39 and 40 in the anticodon stem and loop of transfer RNAs. This is tRNA pseudouridine synthase A from Chromobacterium violaceum (strain ATCC 12472 / DSM 30191 / JCM 1249 / CCUG 213 / NBRC 12614 / NCIMB 9131 / NCTC 9757 / MK).